The chain runs to 196 residues: Peptidyl-tRNA hydrolase (196 aa).

Y18 is a binding site for tRNA. Catalysis depends on H23, which acts as the Proton acceptor. Residues F69, N71, and N117 each contribute to the tRNA site.

Belongs to the PTH family. Monomer.

The protein localises to the cytoplasm. The catalysed reaction is an N-acyl-L-alpha-aminoacyl-tRNA + H2O = an N-acyl-L-amino acid + a tRNA + H(+). In terms of biological role, hydrolyzes ribosome-free peptidyl-tRNAs (with 1 or more amino acids incorporated), which drop off the ribosome during protein synthesis, or as a result of ribosome stalling. Functionally, catalyzes the release of premature peptidyl moieties from peptidyl-tRNA molecules trapped in stalled 50S ribosomal subunits, and thus maintains levels of free tRNAs and 50S ribosomes. The chain is Peptidyl-tRNA hydrolase from Vibrio vulnificus (strain CMCP6).